The following is a 187-amino-acid chain: Phosphatidylethanolamine-binding protein 1 (187 aa).

Residues Ser6 and Ser13 each carry the phosphoserine modification. Thr42 carries the post-translational modification Phosphothreonine. Phosphoserine is present on residues Ser52, Ser54, Ser98, and Ser153. The tract at residues 93 to 134 is interaction with RAF1; the sequence is KGNDISSGTVLSDYVGSGPPKGTGLHRYVWLVYEQDRPLKCD.

Belongs to the phosphatidylethanolamine-binding protein family. Has a tendency to form dimers by disulfide cross-linking. Interacts with RAF1 and this interaction is enhanced if RAF1 is phosphorylated on residues 'Ser-338', 'Ser-339', 'Tyr-340' and 'Tyr-341'. Interacts with ALOX15; in response to IL13/interleukin-13, prevents the interaction of PEBP1 with RAF1 to activate the ERK signaling cascade.

Its subcellular location is the cytoplasm. In terms of biological role, binds ATP, opioids and phosphatidylethanolamine. Has lower affinity for phosphatidylinositol and phosphatidylcholine. Serine protease inhibitor which inhibits thrombin, neuropsin and chymotrypsin but not trypsin, tissue type plasminogen activator and elastase. Inhibits the kinase activity of RAF1 by inhibiting its activation and by dissociating the RAF1/MEK complex and acting as a competitive inhibitor of MEK phosphorylation. Its function is as follows. HCNP may be involved in the function of the presynaptic cholinergic neurons of the central nervous system. HCNP increases the production of choline acetyltransferase but not acetylcholinesterase. Seems to be mediated by a specific receptor. This chain is Phosphatidylethanolamine-binding protein 1 (PEBP1), found in Pongo abelii (Sumatran orangutan).